We begin with the raw amino-acid sequence, 145 residues long: ATP synthase epsilon chain (145 aa).

This sequence belongs to the ATPase epsilon chain family. In terms of assembly, F-type ATPases have 2 components, CF(1) - the catalytic core - and CF(0) - the membrane proton channel. CF(1) has five subunits: alpha(3), beta(3), gamma(1), delta(1), epsilon(1). CF(0) has three main subunits: a, b and c.

It is found in the cell membrane. Produces ATP from ADP in the presence of a proton gradient across the membrane. This is ATP synthase epsilon chain from Buchnera aphidicola subsp. Baizongia pistaciae (strain Bp).